The chain runs to 270 residues: MRPIPVKNRIGKNNIDNAKGLKGNKLIRHYHNLLKEKSRLIASSAPIEKIKNVESELENIGIDAYQRASRSGQAEGKGGDSSKILIKWIRTTPCFSYCARLKEPKDLLEIGSVSVDNKCSTCGLFRVSRIDLHSVHPLIKQQDFLERTPEEGLFTGISCSLVLNFAPPELRAKMLLHCTGLLMPPNKEQPPWLFLVLPSPCITNSRYMDEKTLHSIMIQFGFICRQKSISKKIAYYLYSYECFPMKEIDWKKKIVNDGATRNNFFIPCIL.

S-adenosyl-L-methionine contacts are provided by glycine 111 and aspartate 131.

The protein belongs to the BMT2 family.

The protein localises to the nucleus. The protein resides in the nucleolus. Functionally, S-adenosyl-L-methionine-dependent methyltransferase that specifically methylates the N(1) position of an adenine present in helix 65 in 25S rRNA. This chain is 25S rRNA adenine-N(1) methyltransferase, found in Schizosaccharomyces pombe (strain 972 / ATCC 24843) (Fission yeast).